The sequence spans 102 residues: Biotrophy-associated secreted protein 4 (102 aa).

A signal peptide spans 1-21; sequence MQLSFSAIAILLAFAVNHATA. A glycan (N-linked (GlcNAc...) asparagine) is linked at N36.

It localises to the secreted. Its function is as follows. Secreted effector involved in biotrophic colonization of plant cells. Participates in transition from the biotrophic to the necrotrophic phase of Magnaporthe oryzae. Elicits rice basic defense responses during the early stage of interaction and promotes cell death in the late stage of compatible interaction. In Pyricularia oryzae (strain 70-15 / ATCC MYA-4617 / FGSC 8958) (Rice blast fungus), this protein is Biotrophy-associated secreted protein 4.